The sequence spans 908 residues: Protein translocase subunit SecA (908 aa).

Residues glutamine 87, 105-109 (GEGKT), and aspartate 512 each bind ATP. Positions 865–908 (GGDDGSDEMMAHTPMIRDGDKVGRNDPCPCGSGRKYKQCHGKLS) are disordered. Residues 879 to 888 (MIRDGDKVGR) show a composition bias toward basic and acidic residues. Residues cysteine 892, cysteine 894, cysteine 903, and histidine 904 each coordinate Zn(2+). The span at 898-908 (RKYKQCHGKLS) shows a compositional bias: basic residues.

The protein belongs to the SecA family. In terms of assembly, monomer and homodimer. Part of the essential Sec protein translocation apparatus which comprises SecA, SecYEG and auxiliary proteins SecDF-YajC and YidC. It depends on Zn(2+) as a cofactor.

It is found in the cell inner membrane. The protein resides in the cytoplasm. It carries out the reaction ATP + H2O + cellular proteinSide 1 = ADP + phosphate + cellular proteinSide 2.. Part of the Sec protein translocase complex. Interacts with the SecYEG preprotein conducting channel. Has a central role in coupling the hydrolysis of ATP to the transfer of proteins into and across the cell membrane, serving both as a receptor for the preprotein-SecB complex and as an ATP-driven molecular motor driving the stepwise translocation of polypeptide chains across the membrane. This Shewanella sp. (strain ANA-3) protein is Protein translocase subunit SecA.